The chain runs to 268 residues: Tryptophan synthase alpha chain (268 aa).

Residues Glu-49 and Asp-60 each act as proton acceptor in the active site.

It belongs to the TrpA family. Tetramer of two alpha and two beta chains.

The catalysed reaction is (1S,2R)-1-C-(indol-3-yl)glycerol 3-phosphate + L-serine = D-glyceraldehyde 3-phosphate + L-tryptophan + H2O. It functions in the pathway amino-acid biosynthesis; L-tryptophan biosynthesis; L-tryptophan from chorismate: step 5/5. Its function is as follows. The alpha subunit is responsible for the aldol cleavage of indoleglycerol phosphate to indole and glyceraldehyde 3-phosphate. This is Tryptophan synthase alpha chain from Xanthomonas oryzae pv. oryzae (strain MAFF 311018).